The primary structure comprises 340 residues: Lipoyl synthase (340 aa).

Residues Cys-83, Cys-88, Cys-94, Cys-109, Cys-113, Cys-116, and Ser-323 each coordinate [4Fe-4S] cluster. The 218-residue stretch at 95–312 (FSGGTATFMI…AEEGYKMGFK (218 aa)) folds into the Radical SAM core domain.

The protein belongs to the radical SAM superfamily. Lipoyl synthase family. The cofactor is [4Fe-4S] cluster.

Its subcellular location is the cytoplasm. The catalysed reaction is [[Fe-S] cluster scaffold protein carrying a second [4Fe-4S](2+) cluster] + N(6)-octanoyl-L-lysyl-[protein] + 2 oxidized [2Fe-2S]-[ferredoxin] + 2 S-adenosyl-L-methionine + 4 H(+) = [[Fe-S] cluster scaffold protein] + N(6)-[(R)-dihydrolipoyl]-L-lysyl-[protein] + 4 Fe(3+) + 2 hydrogen sulfide + 2 5'-deoxyadenosine + 2 L-methionine + 2 reduced [2Fe-2S]-[ferredoxin]. Its pathway is protein modification; protein lipoylation via endogenous pathway; protein N(6)-(lipoyl)lysine from octanoyl-[acyl-carrier-protein]: step 2/2. Its function is as follows. Catalyzes the radical-mediated insertion of two sulfur atoms into the C-6 and C-8 positions of the octanoyl moiety bound to the lipoyl domains of lipoate-dependent enzymes, thereby converting the octanoylated domains into lipoylated derivatives. The sequence is that of Lipoyl synthase from Pseudomonas fluorescens (strain Pf0-1).